The chain runs to 245 residues: Probable transcriptional regulatory protein MARTH_orf271 (245 aa).

The protein belongs to the TACO1 family.

It is found in the cytoplasm. This chain is Probable transcriptional regulatory protein MARTH_orf271, found in Metamycoplasma arthritidis (strain 158L3-1) (Mycoplasma arthritidis).